The sequence spans 201 residues: Peroxiredoxin-2F, mitochondrial (201 aa).

The transit peptide at 1–30 (MAMSILKLRNLSALRSAANSARIGVSSRGF) directs the protein to the mitochondrion. Position 37 is a phosphothreonine (threonine 37). The Thioredoxin domain maps to 37–201 (TDITSAAPGV…TGAEVILGQI (165 aa)). Residue cysteine 89 is the Cysteine sulfenic acid (-SOH) intermediate of the active site. Phosphoserine is present on serine 149.

This sequence belongs to the peroxiredoxin family. Prx5 subfamily. As to quaternary structure, monomer. As to expression, expressed in the whole plant.

The protein localises to the mitochondrion matrix. The catalysed reaction is [glutaredoxin]-dithiol + a hydroperoxide = [glutaredoxin]-disulfide + an alcohol + H2O. Its function is as follows. Thiol-specific peroxidase that catalyzes the reduction of hydrogen peroxide and organic hydroperoxides to water and alcohols, respectively. Plays a role in cell protection against oxidative stress by detoxifying peroxides. Reduces preferentially hydrogen peroxide rather than alkyl peroxides. May be involved in mitochondrial redox homeostasis. In Arabidopsis thaliana (Mouse-ear cress), this protein is Peroxiredoxin-2F, mitochondrial (PRXIIF).